The primary structure comprises 161 residues: Nucleotide-binding protein Plav_2177 (161 aa).

This sequence belongs to the YajQ family.

Functionally, nucleotide-binding protein. In Parvibaculum lavamentivorans (strain DS-1 / DSM 13023 / NCIMB 13966), this protein is Nucleotide-binding protein Plav_2177.